The following is a 791-amino-acid chain: Leucine-rich repeat-containing protein SOG2 (791 aa).

Positions 1 to 28 (MVATSSKRTLDPKEEHLPADKTSTNSSN) are disordered. A compositionally biased stretch (basic and acidic residues) spans 8-19 (RTLDPKEEHLPA). 6 LRR repeats span residues 43 to 64 (SGTT…DVGY), 67 to 88 (NVER…FKRL), 90 to 111 (RLQY…LTQC), 113 to 134 (QLEI…ISSF), 138 to 159 (NIRV…KSIT), and 163 to 183 (KLSI…DQVQ). Threonine 214 carries the post-translational modification Phosphothreonine. Disordered regions lie at residues 454 to 506 (ASKA…TPSA) and 534 to 569 (HTHG…PRQQ). Low complexity predominate over residues 469–486 (SSSSITSGGGPAASTTST). A compositionally biased stretch (polar residues) spans 544–569 (NAISNGSSQTNMNEVKTTSDTIPRQQ).

The protein resides in the cytoplasm. In terms of biological role, required for proper cell morphogenesis and cell separation after mitosis. Functions in the RAM (regulation of ACE2 activity and cellular morphogenesis) signaling network and is required for proper ACE2 localization and CBK1 kinase activity. This chain is Leucine-rich repeat-containing protein SOG2, found in Saccharomyces cerevisiae (strain ATCC 204508 / S288c) (Baker's yeast).